Reading from the N-terminus, the 113-residue chain is Putative pterin-4-alpha-carbinolamine dehydratase (113 aa).

This sequence belongs to the pterin-4-alpha-carbinolamine dehydratase family.

The enzyme catalyses (4aS,6R)-4a-hydroxy-L-erythro-5,6,7,8-tetrahydrobiopterin = (6R)-L-erythro-6,7-dihydrobiopterin + H2O. The polypeptide is Putative pterin-4-alpha-carbinolamine dehydratase (Rickettsia bellii (strain OSU 85-389)).